The following is a 508-amino-acid chain: MARPAAGPGGISKFGNDFGLQRWRNTPRYDQTQPLEGSVCGYGLSNPFHESLFSCPAASWPQAKLGRPNTPQEPSKDLKRILSQISPKRIEATIRKLVSFGTRHTLSTQTNATHGIGAARDWIASEFQRYADASDGRLTVKVIGYEQQPDGSRVLFPVRISDVVATLKGSEDPERVYVVSGHYDSRASDPLDYKTDAPGANDDASGVAVSLEIARVMSQRNLPRPKATIVFAAVAGEEQGLLGSNFLAQTYRNSSTNVEGMFTNDIIGSSTADDGTKEPHVIRLFAQGVPPLNVENQAMREKRLMIGGENDTPARQLARFVKETAENKYTDMQVSVIYRLDRYLRGGDHRPFLEAGYPAARFTEPNENYAHQHQNIRIEKDPKTGKDIQYGDLPEFCDFDFISRVGKVNAAALWNLAMSPGMPRNVRVDTSDLSNDSKFTWDPPAGGNAGVGGYEIVWRSTIAPFWTNVMDVGMVQAATIDLSKDNVIFGIRARGKNGERGVAVLPFP.

Asparagine 111 carries N-linked (GlcNAc...) asparagine glycosylation. Residues histidine 182, aspartate 202, and glutamate 238 each contribute to the Zn(2+) site. An N-linked (GlcNAc...) asparagine glycan is attached at asparagine 253. Zn(2+) is bound at residue aspartate 265. Residues 422 to 508 form the Fibronectin type-III domain; that stretch reads MPRNVRVDTS…ERGVAVLPFP (87 aa). Asparagine 435 carries an N-linked (GlcNAc...) asparagine glycan.

Belongs to the peptidase M28 family. M28B subfamily. It depends on Zn(2+) as a cofactor.

The protein localises to the secreted. The polypeptide is Probable zinc metalloprotease MCYG_04217 (Arthroderma otae (strain ATCC MYA-4605 / CBS 113480) (Microsporum canis)).